A 352-amino-acid chain; its full sequence is tRNA-specific 2-thiouridylase MnmA (352 aa).

ATP contacts are provided by residues 6–13 and Leu32; that span reads AMSGGVDS. The active-site Nucleophile is the Cys101. An intrachain disulfide couples Cys101 to Cys194. ATP is bound at residue Gly125. Residues 144 to 146 are interaction with tRNA; the sequence is KDQ. The Cysteine persulfide intermediate role is filled by Cys194.

It belongs to the MnmA/TRMU family.

The protein localises to the cytoplasm. It catalyses the reaction S-sulfanyl-L-cysteinyl-[protein] + uridine(34) in tRNA + AH2 + ATP = 2-thiouridine(34) in tRNA + L-cysteinyl-[protein] + A + AMP + diphosphate + H(+). Its function is as follows. Catalyzes the 2-thiolation of uridine at the wobble position (U34) of tRNA, leading to the formation of s(2)U34. The polypeptide is tRNA-specific 2-thiouridylase MnmA (Frankia alni (strain DSM 45986 / CECT 9034 / ACN14a)).